Here is a 225-residue protein sequence, read N- to C-terminus: Cytidylate kinase (225 aa).

Glycine 11–threonine 19 serves as a coordination point for ATP.

The protein belongs to the cytidylate kinase family. Type 1 subfamily.

The protein resides in the cytoplasm. It catalyses the reaction CMP + ATP = CDP + ADP. The catalysed reaction is dCMP + ATP = dCDP + ADP. The polypeptide is Cytidylate kinase (Bacillus cereus (strain G9842)).